Here is a 326-residue protein sequence, read N- to C-terminus: MWRPRWDPGILKAEALALLPCGLGMAFSQSHVMASRRHQHGRLIIEVDEYSSNPTQAFTFYNINQGRFQPPHVQMVDPVPHDAPKPPGYTRFVCVSDTHSRTDPIQMPYGDVLIHAGDFTELGLPSEVKKFNEWLGSLPYEYKIVIAGNHELTFDQEFMADLIKQDFYYFPSVSKLKPENYENVQSLLTNCIYLQDSEVTVRGFRIYGSPWQPWFYGWGFNLPRGQALLEKWNLIPEGVDILITHGPPLGFLDWVPKKMQRVGCVELLNTVQRRVQPRLHVFGHIHEGYGVMADGTTTYVNASVCTVNYQPVNPPIVIDLPTPRNS.

Belongs to the UPF0046 family.

May have metallophosphoesterase activity (in vitro). This Mus musculus (Mouse) protein is Metallophosphoesterase domain-containing protein 1 (Mpped1).